The following is a 720-amino-acid chain: ATP-dependent RNA helicase glh-3 (720 aa).

Residues 1–11 are compositionally biased toward polar residues; the sequence is MDKSPTKTSIR. Disordered regions lie at residues 1 to 34 and 125 to 180; these read MDKS…SCIK and LNSR…SYGN. Basic and acidic residues-rich tracts occupy residues 141–154 and 162–172; these read NVKE…RSDD and SAKDEERDRDS. 2 consecutive CCHC-type zinc fingers follow at residues 202–219 and 222–239; these read NTCF…ECSA and RECA…ECAS. Positions 298–326 match the Q motif motif; the sequence is KSFSDSDIPQSMRRNVERAGYTRTTPIQQ. A Helicase ATP-binding domain is found at 329–513; it reads LPLVADGKDI…RKLLREDYTM (185 aa). Residue 342 to 349 participates in ATP binding; sequence AQTGSGKT. Positions 456 to 459 match the DEAD box motif; the sequence is DEAD. The region spanning 549 to 698 is the Helicase C-terminal domain; sequence DIDTYTTEKN…VVPSWMKEAA (150 aa). The interval 696–720 is disordered; sequence EAAGGTSNPNKFEKSIDTEEPEEAW.

The protein belongs to the DEAD box helicase family. DDX4/VASA subfamily. As to quaternary structure, interacts with csn-5. Interacts (via C-terminus) with kgb-1. Interacts with zyx-1.

Its subcellular location is the cytoplasm. It catalyses the reaction ATP + H2O = ADP + phosphate + H(+). In terms of biological role, probable ATP-binding RNA helicase. In Caenorhabditis elegans, this protein is ATP-dependent RNA helicase glh-3.